We begin with the raw amino-acid sequence, 590 residues long: Probable indole-3-acetic acid-amido synthetase GH3.1 (590 aa).

It belongs to the IAA-amido conjugating enzyme family.

Functionally, catalyzes the synthesis of indole-3-acetic acid (IAA)-amino acid conjugates, providing a mechanism for the plant to cope with the presence of excess auxin. The protein is Probable indole-3-acetic acid-amido synthetase GH3.1 (GH3.1) of Arabidopsis thaliana (Mouse-ear cress).